The following is a 142-amino-acid chain: Transcription antitermination protein NusB (142 aa).

This sequence belongs to the NusB family.

In terms of biological role, involved in transcription antitermination. Required for transcription of ribosomal RNA (rRNA) genes. Binds specifically to the boxA antiterminator sequence of the ribosomal RNA (rrn) operons. This is Transcription antitermination protein NusB from Streptococcus mutans serotype c (strain ATCC 700610 / UA159).